Consider the following 31-residue polypeptide: Palustrin-2c (31 aa).

Cysteines 23 and 29 form a disulfide.

Expressed by the skin glands.

The protein resides in the secreted. Its function is as follows. Antimicrobial activity against Gram-negative bacterium E.coli. This Lithobates palustris (Pickerel frog) protein is Palustrin-2c.